The following is a 116-amino-acid chain: Ribonuclease P protein component (116 aa).

The protein belongs to the RnpA family. In terms of assembly, consists of a catalytic RNA component (M1 or rnpB) and a protein subunit.

It catalyses the reaction Endonucleolytic cleavage of RNA, removing 5'-extranucleotides from tRNA precursor.. In terms of biological role, RNaseP catalyzes the removal of the 5'-leader sequence from pre-tRNA to produce the mature 5'-terminus. It can also cleave other RNA substrates such as 4.5S RNA. The protein component plays an auxiliary but essential role in vivo by binding to the 5'-leader sequence and broadening the substrate specificity of the ribozyme. The chain is Ribonuclease P protein component from Pseudanabaena sp. (strain PCC 6903).